Here is a 610-residue protein sequence, read N- to C-terminus: UvrABC system protein C (610 aa).

In terms of domain architecture, GIY-YIG spans Ser-16 to Val-94. The UVR domain maps to Asp-204 to Val-239.

This sequence belongs to the UvrC family. Interacts with UvrB in an incision complex.

The protein localises to the cytoplasm. Functionally, the UvrABC repair system catalyzes the recognition and processing of DNA lesions. UvrC both incises the 5' and 3' sides of the lesion. The N-terminal half is responsible for the 3' incision and the C-terminal half is responsible for the 5' incision. The sequence is that of UvrABC system protein C from Escherichia coli (strain UTI89 / UPEC).